A 376-amino-acid polypeptide reads, in one-letter code: Chaperone protein DnaJ 2 (376 aa).

Residues 5–70 (DYYEVLGVNR…QKRAAYDRYG (66 aa)) form the J domain. The segment at 135-213 (GADKTIRIPT…CGGAGRVKRQ (79 aa)) adopts a CR-type zinc-finger fold. Residues Cys148, Cys151, Cys165, Cys168, Cys187, Cys190, Cys201, and Cys204 each contribute to the Zn(2+) site. CXXCXGXG motif repeat units follow at residues 148–155 (CETCHGSG), 165–172 (CPTCGGAG), 187–194 (CPKCHGTG), and 201–208 (CRDCGGAG).

Belongs to the DnaJ family. In terms of assembly, homodimer. Requires Zn(2+) as cofactor.

It localises to the cytoplasm. Participates actively in the response to hyperosmotic and heat shock by preventing the aggregation of stress-denatured proteins and by disaggregating proteins, also in an autonomous, DnaK-independent fashion. Unfolded proteins bind initially to DnaJ; upon interaction with the DnaJ-bound protein, DnaK hydrolyzes its bound ATP, resulting in the formation of a stable complex. GrpE releases ADP from DnaK; ATP binding to DnaK triggers the release of the substrate protein, thus completing the reaction cycle. Several rounds of ATP-dependent interactions between DnaJ, DnaK and GrpE are required for fully efficient folding. Also involved, together with DnaK and GrpE, in the DNA replication of plasmids through activation of initiation proteins. The sequence is that of Chaperone protein DnaJ 2 from Aromatoleum aromaticum (strain DSM 19018 / LMG 30748 / EbN1) (Azoarcus sp. (strain EbN1)).